The following is a 470-amino-acid chain: Heparan-sulfate 6-O-sulfotransferase 3 (470 aa).

At 1-4 the chain is on the cytoplasmic side; it reads MDER. A helical; Signal-anchor for type II membrane protein transmembrane segment spans residues 5–27; the sequence is FNKWLLTPVLTLLFVVIMYQYVS. Topologically, residues 28–470 are lumenal; it reads PSCTSSCTNF…EDYNSQVVRW (443 aa). The disordered stretch occupies residues 36-121; sequence NFGEQLRSGE…EAPENGSLPR (86 aa). Over residues 88–113 the composition is skewed to acidic residues; that stretch reads PEDEDEDPGDPEEEEEEEEEEPDPEA. N-linked (GlcNAc...) asparagine glycans are attached at residues Asn-116 and Asn-127. 151 to 159 serves as a coordination point for 3'-phosphoadenylyl sulfate; the sequence is HIQKTGGTT. Substrate-binding positions include 181-182, Arg-198, Trp-203, and His-208; that span reads KK. His-208 (proton acceptor) is an active-site residue. A glycan (N-linked (GlcNAc...) asparagine) is linked at Asn-230. Positions 244 and 252 each coordinate 3'-phosphoadenylyl sulfate. Substrate contacts are provided by His-256 and Trp-263. 2 N-linked (GlcNAc...) asparagine glycosylation sites follow: Asn-323 and Asn-328. 376-378 contacts 3'-phosphoadenylyl sulfate; sequence TQF. A glycan (N-linked (GlcNAc...) asparagine) is linked at Asn-379. 382 to 383 serves as a coordination point for 3'-phosphoadenylyl sulfate; sequence RA. A disordered region spans residues 421 to 453; that stretch reads TKQLEHQRDRQKRREERRLQREHRAHRWPKEDR. Basic and acidic residues predominate over residues 422 to 439; it reads KQLEHQRDRQKRREERRL.

The protein belongs to the sulfotransferase 6 family. As to expression, ubiquitously expressed.

Its subcellular location is the membrane. It catalyses the reaction alpha-D-glucosaminyl-[heparan sulfate](n) + 3'-phosphoadenylyl sulfate = 6-sulfo-alpha-D-glucosaminyl-[heparan sulfate](n) + adenosine 3',5'-bisphosphate + H(+). In terms of biological role, 6-O-sulfation enzyme which catalyzes the transfer of sulfate from 3'-phosphoadenosine 5'-phosphosulfate (PAPS) to position 6 of the N-sulfoglucosamine residue (GlcNS) of heparan sulfate. This Mus musculus (Mouse) protein is Heparan-sulfate 6-O-sulfotransferase 3 (Hs6st3).